Reading from the N-terminus, the 731-residue chain is Auxin response factor 3 (731 aa).

Positions 1–22 are enriched in low complexity; the sequence is MASSASSSSSPSSRPPLMALPS. Positions 1–41 are disordered; the sequence is MASSASSSSSPSSRPPLMALPSFYRPPWPSERGGEQRATDC. The TF-B3 DNA-binding region spans 191–293; that stretch reads FCKTLTASDT…ELRLGVRRAT (103 aa).

It belongs to the ARF family. Homo and heterodimers. In terms of tissue distribution, expressed in roots, culms, leaves and young panicles.

It is found in the nucleus. Auxin response factors (ARFs) are transcriptional factors that bind specifically to the DNA sequence 5'-TGTCTC-3' found in the auxin-responsive promoter elements (AuxREs). In Oryza sativa subsp. japonica (Rice), this protein is Auxin response factor 3 (ARF3).